A 494-amino-acid chain; its full sequence is Ankyrin repeat domain-containing protein 33B (494 aa).

The interval Met1–Pro80 is disordered. Over residues Val30 to Asp42 the composition is skewed to acidic residues. 5 ANK repeats span residues Pro84–Glu113, Asn120–Trp150, Glu154–Leu183, Phe189–Ala218, and Arg223–Phe255. The segment at Arg349–Thr494 is disordered. Residues Thr371–Ser382 show a composition bias toward basic and acidic residues. Ser405 is subject to Phosphoserine. 2 stretches are compositionally biased toward basic and acidic residues: residues Arg440–Gly451 and Arg459–Thr487. Positions Arg459–Ala488 form a coiled coil.

This Homo sapiens (Human) protein is Ankyrin repeat domain-containing protein 33B (ANKRD33B).